We begin with the raw amino-acid sequence, 332 residues long: tRNA-dihydrouridine synthase B (332 aa).

FMN is bound by residues 16 to 18 (PMA) and Gln70. The active-site Proton donor is Cys100. Residues Lys139, 200–202 (NGD), and 224–225 (GR) each bind FMN.

It belongs to the Dus family. DusB subfamily. The cofactor is FMN.

The enzyme catalyses a 5,6-dihydrouridine in tRNA + NAD(+) = a uridine in tRNA + NADH + H(+). It carries out the reaction a 5,6-dihydrouridine in tRNA + NADP(+) = a uridine in tRNA + NADPH + H(+). Catalyzes the synthesis of 5,6-dihydrouridine (D), a modified base found in the D-loop of most tRNAs, via the reduction of the C5-C6 double bond in target uridines. The sequence is that of tRNA-dihydrouridine synthase B from Xanthomonas axonopodis pv. citri (strain 306).